Reading from the N-terminus, the 153-residue chain is ORM1-like protein 3 (153 aa).

The segment at 1 to 17 (MNVGTAHSEVNPNTRVM) is important for ceramide level-sensing. The Cytoplasmic portion of the chain corresponds to 1–21 (MNVGTAHSEVNPNTRVMNSRG). 2 helical membrane-spanning segments follow: residues 22–44 (IWLS…PFVS) and 45–63 (VPVV…MYIF). At 64–100 (LHTVKGTPFETPDQGKARLLTHWEQMDYGVQFTASRK) the chain is on the cytoplasmic side. A helical membrane pass occupies residues 101–117 (FLTITPIVLYFLTSFYT). Residues 118–121 (KYDQ) lie on the Lumenal side of the membrane. Residues 122 to 139 (IHFVLNTVSLMSVLIPKL) form a helical membrane-spanning segment. Proline 137 is modified (hydroxyproline). Residues 140-153 (PQLHGVRIFGINKY) lie on the Cytoplasmic side of the membrane.

This sequence belongs to the ORM family. In terms of assembly, ceramide-sensitive subunit of the serine palmitoyltransferase (SPT) complex, which is also composed of SPTLC1, SPTLC2/3 and SPTSSA/B. Post-translationally, when hydroxylated at Pro-137, ubiquitinated via 'Lys-48'-linkage, leading to proteasomal degradation. In endothelial cells, ORMDL3 proteasomal degradation is controlled by the sphingosine 1-phosphate receptor signaling pathway. In terms of tissue distribution, widely expressed. Expressed in adult and fetal heart, brain, lung, liver, skeletal muscle and kidney. Expressed in adult pancreas and placenta and in fetal spleen and thymus.

The protein localises to the endoplasmic reticulum membrane. Plays an essential role in the homeostatic regulation of sphingolipid de novo biosynthesis by modulating the activity of the serine palmitoyltransferase (SPT) in response to ceramide levels. When complexed to SPT, the binding of ceramides to its N-terminus stabilizes a conformation that block SPT substrate entry, hence preventing SPT catalytic activity. Through this mechanism, maintains ceramide levels at sufficient concentrations for the production of complex sphingolipids, but which prevents the accumulation of ceramides to levels that trigger apoptosis. This chain is ORM1-like protein 3 (ORMDL3), found in Homo sapiens (Human).